The primary structure comprises 498 residues: Protein flp (498 aa).

4 consecutive transmembrane segments (helical) span residues 6 to 26 (LYFL…IHIT), 389 to 409 (FNIV…FSAY), 433 to 453 (LTLC…YLIL), and 471 to 491 (LALI…LLFL).

The protein resides in the cell membrane. Its precise function is unknown. Has no penicillin-binding activity and is not involved in methicillin resistance. The sequence is that of Protein flp (flp) from Staphylococcus aureus (strain MW2).